Here is a 137-residue protein sequence, read N- to C-terminus: Histone H2B (137 aa).

Positions 1–10 are enriched in basic and acidic residues; it reads MPPKAADKKP. The disordered stretch occupies residues 1–45; sequence MPPKAADKKPASKAPATASKAPEKKDAGKKTAASGDKKKRTKTRK. Residues lysine 8 and lysine 9 each carry the N6-acetyllysine; alternate modification. Glycyl lysine isopeptide (Lys-Gly) (interchain with G-Cter in SUMO); alternate cross-links involve residues lysine 8 and lysine 9. A Phosphoserine modification is found at serine 12. Lysine 13 bears the N6-acetyllysine mark. An N6-acetyllysine; alternate modification is found at lysine 24. Lysine 24 participates in a covalent cross-link: Glycyl lysine isopeptide (Lys-Gly) (interchain with G-Cter in SUMO); alternate. Residue lysine 25 forms a Glycyl lysine isopeptide (Lys-Gly) (interchain with G-Cter in SUMO) linkage. A Glycyl lysine isopeptide (Lys-Gly) (interchain with G-Cter in ubiquitin) cross-link involves residue lysine 131.

It belongs to the histone H2B family. The nucleosome is a histone octamer containing two molecules each of H2A, H2B, H3 and H4 assembled in one H3-H4 heterotetramer and two H2A-H2B heterodimers. The octamer wraps approximately 147 bp of DNA. Monoubiquitinated by the UBC2-BRE1 complex to form H2BK123ub1. H2BK123ub1 gives a specific tag for epigenetic transcriptional activation and is also prerequisite for H3K4me and H3K79me formation. H2BK123ub1 also modulates the formation of double-strand breaks during meiosis and is a prerequisite for DNA-damage checkpoint activation. Post-translationally, phosphorylated by STE20 to form H2BS10ph during progression through meiotic prophase. May be correlated with chromosome condensation. In terms of processing, acetylated by GCN5 to form H2BK11ac and H2BK16ac. H2BK16ac can also be formed by ESA1. Acetylation of N-terminal lysines and particularly formation of H2BK11acK16ac has a positive effect on transcription. Sumoylation to form H2BK6su or H2BK7su, and probably also H2BK16su or H2BK17su, occurs preferentially near the telomeres and represses gene transcription.

Its subcellular location is the nucleus. The protein localises to the chromosome. Its function is as follows. Core component of nucleosome. Nucleosomes wrap and compact DNA into chromatin, limiting DNA accessibility to the cellular machineries which require DNA as a template. Histones thereby play a central role in transcription regulation, DNA repair, DNA replication and chromosomal stability. DNA accessibility is regulated via a complex set of post-translational modifications of histones, also called histone code, and nucleosome remodeling. This is Histone H2B (HTB1) from Pyricularia oryzae (strain Y34) (Rice blast fungus).